Consider the following 161-residue polypeptide: Protein translocase subunit SecE (161 aa).

A compositionally biased stretch (acidic residues) spans 1-12 (MSDEGDVADEAV). Residues 1–80 (MSDEGDVADE…GVAKDDSTTK (80 aa)) are disordered. Residues 133 to 153 (VVLAFLAFMVALVAGADLGLT) form a helical membrane-spanning segment.

It belongs to the SecE/SEC61-gamma family. In terms of assembly, component of the Sec protein translocase complex. Heterotrimer consisting of SecY, SecE and SecG subunits. The heterotrimers can form oligomers, although 1 heterotrimer is thought to be able to translocate proteins. Interacts with the ribosome. Interacts with SecDF, and other proteins may be involved. Interacts with SecA.

Its subcellular location is the cell membrane. Essential subunit of the Sec protein translocation channel SecYEG. Clamps together the 2 halves of SecY. May contact the channel plug during translocation. This chain is Protein translocase subunit SecE, found in Mycobacterium bovis (strain ATCC BAA-935 / AF2122/97).